Reading from the N-terminus, the 199-residue chain is NAD(P)H dehydrogenase (quinone) (199 aa).

Residues 4–190 (VLVLYYSAYG…AGARYQGKTI (187 aa)) enclose the Flavodoxin-like domain. Residues 10 to 15 (SAYGHI) and 78 to 80 (TRF) contribute to the FMN site. Tyr12 contributes to the NAD(+) binding site. Substrate is bound at residue Trp98. FMN is bound by residues 113-119 (STATQHG) and His134.

The protein belongs to the WrbA family. FMN serves as cofactor.

It carries out the reaction a quinone + NADH + H(+) = a quinol + NAD(+). It catalyses the reaction a quinone + NADPH + H(+) = a quinol + NADP(+). The sequence is that of NAD(P)H dehydrogenase (quinone) from Rhodopseudomonas palustris (strain HaA2).